The primary structure comprises 898 residues: Cip1-interacting zinc finger protein (898 aa).

Disordered stretches follow at residues 48 to 69, 157 to 305, and 318 to 471; these read QAPL…QPLL, QSLL…ALEA, and VQAQ…QPQV. Residues 170–203 show a composition bias toward polar residues; sequence NPSQFNLSGRNPQKQARTSSSTTPNRKDSSSQTM. Residue S209 is modified to Phosphoserine. T244 is modified (phosphothreonine). Basic and acidic residues predominate over residues 263–273; the sequence is RSSEEPTEKEP. A Glycyl lysine isopeptide (Lys-Gly) (interchain with G-Cter in SUMO2) cross-link involves residue K280. A compositionally biased stretch (low complexity) spans 318 to 327; the sequence is VQAQVQSQTQ. Residues 328–351 are compositionally biased toward polar residues; the sequence is PRIPSTDTQVQPKLQKQAQTQTSP. Residue K340 forms a Glycyl lysine isopeptide (Lys-Gly) (interchain with G-Cter in SUMO2) linkage. A Phosphoserine modification is found at S350. The segment covering 355–383 has biased composition (low complexity); sequence VLQQKQVQPQLQQEAEPQKQVQPQVQPQA. Residues 384–395 show a composition bias toward polar residues; it reads HSQGPRQVQLQQ. Residue K401 forms a Glycyl lysine isopeptide (Lys-Gly) (interchain with G-Cter in SUMO2) linkage. Positions 402–435 are enriched in low complexity; sequence QVQPQVQPQAHSQPPRQVQLQLQKQVQTQTYPQV. A compositionally biased stretch (polar residues) spans 436–445; the sequence is HTQAQPSVQP. Position 547 is a phosphoserine (S547). Residue K549 forms a Glycyl lysine isopeptide (Lys-Gly) (interchain with G-Cter in SUMO2) linkage. A disordered region spans residues 562 to 584; sequence STVPLTPVPRPSDSVSSTPAATS. At T567 the chain carries Phosphothreonine. The segment covering 572–584 has biased composition (low complexity); it reads PSDSVSSTPAATS. Glycyl lysine isopeptide (Lys-Gly) (interchain with G-Cter in SUMO2) cross-links involve residues K588, K680, and K705. The Matrin-type zinc finger occupies 799–830; it reads YICRICHKFYHSNSGAQLSHCKSLGHFENLQK. S821 carries the phosphoserine modification. K830 participates in a covalent cross-link: Glycyl lysine isopeptide (Lys-Gly) (interchain with G-Cter in SUMO2). S838 carries the post-translational modification Phosphoserine. The span at 859-879 shows a compositional bias: polar residues; it reads LFTSSGRPPSQPNTQDKTPSK. The disordered stretch occupies residues 859 to 898; sequence LFTSSGRPPSQPNTQDKTPSKVTARPSQPPLPRRSTRLKT. Residue K879 forms a Glycyl lysine isopeptide (Lys-Gly) (interchain with G-Cter in SUMO2) linkage.

In terms of assembly, interacts with CIP/WAF1.

The protein resides in the nucleus. Functionally, may regulate the subcellular localization of CIP/WAF1. The sequence is that of Cip1-interacting zinc finger protein (CIZ1) from Homo sapiens (Human).